The chain runs to 150 residues: UPF0178 protein Bpet3884 (150 aa).

The protein belongs to the UPF0178 family.

The chain is UPF0178 protein Bpet3884 from Bordetella petrii (strain ATCC BAA-461 / DSM 12804 / CCUG 43448).